A 379-amino-acid polypeptide reads, in one-letter code: Probable pectin lyase A (379 aa).

An N-terminal signal peptide occupies residues 1-20 (MKYSTIFSAAAAVFAGSAAA). Disulfide bonds link C83–C102 and C92–C226. The N-linked (GlcNAc...) asparagine glycan is linked to N129. R256 is a catalytic residue. An intrachain disulfide couples C322 to C330.

The protein belongs to the polysaccharide lyase 1 family.

The protein resides in the secreted. It catalyses the reaction Eliminative cleavage of (1-&gt;4)-alpha-D-galacturonan methyl ester to give oligosaccharides with 4-deoxy-6-O-methyl-alpha-D-galact-4-enuronosyl groups at their non-reducing ends.. Functionally, pectinolytic enzymes consist of four classes of enzymes: pectin lyase, polygalacturonase, pectin methylesterase and rhamnogalacturonase. Among pectinolytic enzymes, pectin lyase is the most important in depolymerization of pectin, since it cleaves internal glycosidic bonds of highly methylated pectins. The polypeptide is Probable pectin lyase A (pelA) (Aspergillus niger (strain ATCC MYA-4892 / CBS 513.88 / FGSC A1513)).